A 153-amino-acid polypeptide reads, in one-letter code: Regulatory protein RecX (153 aa).

Belongs to the RecX family.

Its subcellular location is the cytoplasm. Modulates RecA activity. This is Regulatory protein RecX from Pseudomonas aeruginosa (strain UCBPP-PA14).